We begin with the raw amino-acid sequence, 422 residues long: Tyrosine--tRNA ligase (422 aa).

Position 37 (tyrosine 37) interacts with L-tyrosine. A 'HIGH' region motif is present at residues 42–51 (PTEESLHIGH). The L-tyrosine site is built by tyrosine 175 and glutamine 179. The 'KMSKS' region motif lies at 235–239 (KFGKT). Lysine 238 is a binding site for ATP. Residues 357–414 (KDLQEALVLTSLAQSRTQAKNMIISNSISINTEKIRKNHIFHEKDKLFGKFTLLSRGK) form the S4 RNA-binding domain.

The protein belongs to the class-I aminoacyl-tRNA synthetase family. TyrS type 1 subfamily. In terms of assembly, homodimer.

It is found in the cytoplasm. The enzyme catalyses tRNA(Tyr) + L-tyrosine + ATP = L-tyrosyl-tRNA(Tyr) + AMP + diphosphate + H(+). In terms of biological role, catalyzes the attachment of tyrosine to tRNA(Tyr) in a two-step reaction: tyrosine is first activated by ATP to form Tyr-AMP and then transferred to the acceptor end of tRNA(Tyr). This is Tyrosine--tRNA ligase from Buchnera aphidicola subsp. Acyrthosiphon pisum (strain Tuc7).